A 289-amino-acid chain; its full sequence is Aquaporin-2 (289 aa).

Positions 1 to 36 are disordered; that stretch reads MSNESNDLEKNISHLDPTGVDNAYIPPEQPETKHSR. Over 1–47 the chain is Cytoplasmic; the sequence is MSNESNDLEKNISHLDPTGVDNAYIPPEQPETKHSRFNIDRDTLRNH. Residues 48–68 form a helical membrane-spanning segment; that stretch reads FIAAVGEFCGTFMFLWCAYVI. Topologically, residues 69–90 are extracellular; the sequence is CNVANHDVALTTEPEGSHPGQL. Residues 91–111 traverse the membrane as a helical segment; that stretch reads IMIALGFGFSVMFSIWCFAGV. Topologically, residues 112–135 are cytoplasmic; sequence SGGALNPAVSLSLCLARAISPARC. The NPA 1 motif lies at 117–119; that stretch reads NPA. Residues 136–156 form a helical membrane-spanning segment; that stretch reads VVMWFPQIIAGMAAGGAASAM. Over 157–175 the chain is Extracellular; that stretch reads TPGKVLFTNALGLGCSRSR. Residues 176-196 form a helical membrane-spanning segment; it reads GLFLEMFGTAVLCLTVLMTAV. Residues 197-202 are Cytoplasmic-facing; it reads EKRETN. The helical transmembrane segment at 203 to 223 threads the bilayer; that stretch reads FMAALPIGISLFMAHMALTGY. At 224–247 the chain is on the extracellular side; the sequence is TGTGVNPARSLGAAVAARYFPHYH. An NPA 2 motif is present at residues 229–231; the sequence is NPA. The helical transmembrane segment at 248 to 268 threads the bilayer; the sequence is WIYWIGPLLGAFLAWSVWQLL. The Cytoplasmic portion of the chain corresponds to 269–289; the sequence is QILDYTTYVNAEKAAGQKKED.

Belongs to the MIP/aquaporin (TC 1.A.8) family.

Its subcellular location is the endoplasmic reticulum membrane. The protein resides in the cell membrane. Water channel required to facilitate the transport of water across membranes. Involved in freeze tolerance, osmotolerance and cell flocculation in liquid cultures. Is non-functional in most laboratory strains. This is Aquaporin-2 (AQY2) from Saccharomyces cerevisiae (Baker's yeast).